The following is an 829-amino-acid chain: DNA topoisomerase 1 (829 aa).

Residues 1–248 (MSEDHVQNDS…AKGNEEGVKK (248 aa)) are disordered. Positions 22–36 (HKHKKDKEHRHKEHK) are enriched in basic residues. 3 stretches are compositionally biased toward basic and acidic residues: residues 37-58 (KDKD…SEKK), 68-159 (KHRE…EKMK), and 193-220 (KENK…DDKK). Interaction with DNA regions lie at residues 481–482 (KY), 544–549 (RAGNEK), and 641–643 (TAK). The Topo IB-type catalytic domain occupies 488–821 (SSRIKGEKDW…SIWQTTTSNF (334 aa)). Tyrosine 779 serves as the catalytic O-(3'-phospho-DNA)-tyrosine intermediate.

This sequence belongs to the type IB topoisomerase family. Monomer.

It localises to the nucleus. The enzyme catalyses ATP-independent breakage of single-stranded DNA, followed by passage and rejoining.. Its function is as follows. Releases the supercoiling and torsional tension of DNA introduced during the DNA replication and transcription by transiently cleaving and rejoining one strand of the DNA duplex. Introduces a single-strand break via transesterification at a target site in duplex DNA. The scissile phosphodiester is attacked by the catalytic tyrosine of the enzyme, resulting in the formation of a DNA-(3'-phosphotyrosyl)-enzyme intermediate and the expulsion of a 5'-OH DNA strand. TThe free DNA strand then rotates around the intact phosphodiester bond on the opposing strand, thus removing DNA supercoils. Finally, in the religation step, the DNA 5'-OH attacks the covalent intermediate to expel the active-site tyrosine and restore the DNA phosphodiester backbone. May play a role in the circadian transcription of the core circadian clock component BMAL1. The chain is DNA topoisomerase 1 (top1) from Xenopus laevis (African clawed frog).